Here is a 640-residue protein sequence, read N- to C-terminus: Chaperone protein DnaK (640 aa).

T198 carries the post-translational modification Phosphothreonine; by autocatalysis. Residues 600–640 (KTQGAGAEGGEQPHGEQEAGGAAKGEKVVDADFEEVKDDKK) form a disordered region. Over residues 630 to 640 (ADFEEVKDDKK) the composition is skewed to acidic residues.

This sequence belongs to the heat shock protein 70 family.

Functionally, acts as a chaperone. This Citrifermentans bemidjiense (strain ATCC BAA-1014 / DSM 16622 / JCM 12645 / Bem) (Geobacter bemidjiensis) protein is Chaperone protein DnaK.